Consider the following 388-residue polypeptide: Chaperone protein DnaJ 1 (388 aa).

In terms of domain architecture, J spans 10–74; the sequence is DFYKELGVSS…VKRKEYDETR (65 aa). Residues 159–237 form a CR-type zinc finger; sequence GVAMPLRLTS…CKGTGVTTRT (79 aa). Zn(2+) contacts are provided by C172, C175, C189, C192, C211, C214, C225, and C228. CXXCXGXG motif repeat units follow at residues 172 to 179, 189 to 196, 211 to 218, and 225 to 232; these read CTNCHGSG, CSTCNGSG, CTECRGSG, and CEECKGTG.

Belongs to the DnaJ family. As to quaternary structure, homodimer. Zn(2+) is required as a cofactor.

It localises to the cytoplasm. Functionally, participates actively in the response to hyperosmotic and heat shock by preventing the aggregation of stress-denatured proteins and by disaggregating proteins, also in an autonomous, DnaK-independent fashion. Unfolded proteins bind initially to DnaJ; upon interaction with the DnaJ-bound protein, DnaK hydrolyzes its bound ATP, resulting in the formation of a stable complex. GrpE releases ADP from DnaK; ATP binding to DnaK triggers the release of the substrate protein, thus completing the reaction cycle. Several rounds of ATP-dependent interactions between DnaJ, DnaK and GrpE are required for fully efficient folding. Also involved, together with DnaK and GrpE, in the DNA replication of plasmids through activation of initiation proteins. The sequence is that of Chaperone protein DnaJ 1 from Mycobacterium leprae (strain TN).